We begin with the raw amino-acid sequence, 131 residues long: Profilin-1 (131 aa).

Cysteines 13 and 115 form a disulfide. The short motif at 81–97 (RVIRGKKGAGGITIKKT) is the Involved in PIP2 interaction element. At Thr111 the chain carries Phosphothreonine.

It belongs to the profilin family. Occurs in many kinds of cells as a complex with monomeric actin in a 1:1 ratio.

It is found in the cytoplasm. It localises to the cytoskeleton. Its function is as follows. Binds to actin and affects the structure of the cytoskeleton. At high concentrations, profilin prevents the polymerization of actin, whereas it enhances it at low concentrations. By binding to PIP2, it inhibits the formation of IP3 and DG. In Phleum pratense (Common timothy), this protein is Profilin-1 (PRO1).